Reading from the N-terminus, the 242-residue chain is MLLGVNIDHIATVRNARGTTYPSPVEAALVAETHGADLITMHLREDRRHIKDADVFAVKNAIRTRLNLEMALTEEMLENALKVMPEDVCIVPEKRQEITTEGGLDVLAQQEKIAGFTKILTDAGIRVSLFIDADDRQIQAARDVGAPVVELHTGAYADARSHAEQIRQFERIQNGAHFAGDLGLVVNAGHGLTIHNVTPIAQILAIRELNIGHSLIAQALFLGLPEAVRQMKEAMFRARLLP.

N6 lines the 3-amino-2-oxopropyl phosphate pocket. D8 to H9 provides a ligand contact to 1-deoxy-D-xylulose 5-phosphate. 3-amino-2-oxopropyl phosphate is bound at residue R17. The active-site Proton acceptor is H42. Residues R44 and H49 each contribute to the 1-deoxy-D-xylulose 5-phosphate site. Residue E69 is the Proton acceptor of the active site. T99 is a 1-deoxy-D-xylulose 5-phosphate binding site. H190 (proton donor) is an active-site residue. Residues G191 and G212 to H213 each bind 3-amino-2-oxopropyl phosphate.

The protein belongs to the PNP synthase family. As to quaternary structure, homooctamer; tetramer of dimers.

The protein resides in the cytoplasm. It catalyses the reaction 3-amino-2-oxopropyl phosphate + 1-deoxy-D-xylulose 5-phosphate = pyridoxine 5'-phosphate + phosphate + 2 H2O + H(+). It participates in cofactor biosynthesis; pyridoxine 5'-phosphate biosynthesis; pyridoxine 5'-phosphate from D-erythrose 4-phosphate: step 5/5. In terms of biological role, catalyzes the complicated ring closure reaction between the two acyclic compounds 1-deoxy-D-xylulose-5-phosphate (DXP) and 3-amino-2-oxopropyl phosphate (1-amino-acetone-3-phosphate or AAP) to form pyridoxine 5'-phosphate (PNP) and inorganic phosphate. This Neisseria meningitidis serogroup B (strain ATCC BAA-335 / MC58) protein is Pyridoxine 5'-phosphate synthase.